The chain runs to 164 residues: S-ribosylhomocysteine lyase (164 aa).

Fe cation is bound by residues His-54, His-58, and Cys-128.

The protein belongs to the LuxS family. In terms of assembly, homodimer. Requires Fe cation as cofactor.

It catalyses the reaction S-(5-deoxy-D-ribos-5-yl)-L-homocysteine = (S)-4,5-dihydroxypentane-2,3-dione + L-homocysteine. In terms of biological role, involved in the synthesis of autoinducer 2 (AI-2) which is secreted by bacteria and is used to communicate both the cell density and the metabolic potential of the environment. The regulation of gene expression in response to changes in cell density is called quorum sensing. Catalyzes the transformation of S-ribosylhomocysteine (RHC) to homocysteine (HC) and 4,5-dihydroxy-2,3-pentadione (DPD). This chain is S-ribosylhomocysteine lyase, found in Campylobacter hominis (strain ATCC BAA-381 / DSM 21671 / CCUG 45161 / LMG 19568 / NCTC 13146 / CH001A).